The chain runs to 327 residues: Quinone oxidoreductase (327 aa).

Belongs to the zinc-containing alcohol dehydrogenase family. Quinone oxidoreductase subfamily. Homodimer.

It catalyses the reaction 2 a quinone + NADPH + H(+) = 2 a 1,4-benzosemiquinone + NADP(+). The protein is Quinone oxidoreductase (qor) of Salmonella typhimurium (strain LT2 / SGSC1412 / ATCC 700720).